The following is a 232-amino-acid chain: Thiamine import ATP-binding protein ThiQ (232 aa).

The ABC transporter domain maps to L2–I230. Position 32–39 (G32–S39) interacts with ATP.

It belongs to the ABC transporter superfamily. Thiamine importer (TC 3.A.1.19.1) family. The complex is composed of two ATP-binding proteins (ThiQ), two transmembrane proteins (ThiP) and a solute-binding protein (ThiB).

The protein localises to the cell inner membrane. The enzyme catalyses thiamine(out) + ATP + H2O = thiamine(in) + ADP + phosphate + H(+). Part of the ABC transporter complex ThiBPQ involved in thiamine import. Responsible for energy coupling to the transport system. The polypeptide is Thiamine import ATP-binding protein ThiQ (Shigella flexneri serotype 5b (strain 8401)).